Consider the following 651-residue polypeptide: Probable potassium transport system protein Kup (651 aa).

12 helical membrane passes run 41–61 (LVLGALGVVYGDIGTSPIYAF), 82–102 (VVSLIFWALTLVVTVKYVLFV), 130–150 (LILGVGICGAALFFGDAVITP), 163–183 (IVAPNLTPFVVPATVVILVTL), 194–214 (VAIVFGPIMALWFVALGASGL), 235–255 (FLTVSPAVAFVTVGAVFLAMT), 276–296 (WLWIVFPCLLLNYFGQAAFIL), 309–329 (MIPSFALWPMVLLATAATVIA), 366–386 (IYIPRVNLLLGLAVVILVLGF), 395–415 (AYGIAVTGNMLVTTVLLYIVM), 426–446 (ALPIILGFLVIDMLFFSANII), and 450–470 (EGGWASIGIATVLVLIMWTWV).

Belongs to the HAK/KUP transporter (TC 2.A.72) family.

It localises to the cell inner membrane. The catalysed reaction is K(+)(in) + H(+)(in) = K(+)(out) + H(+)(out). Functionally, transport of potassium into the cell. Likely operates as a K(+):H(+) symporter. The protein is Probable potassium transport system protein Kup of Brucella canis (strain ATCC 23365 / NCTC 10854 / RM-666).